A 638-amino-acid chain; its full sequence is MQKKETLEFQSEVKQLLNLMIHSLYSNKEIFLRELISNASDALDKLRFLSISDEKIKIKQNKLCIFIDYDKNKKSITIQDNGIGMSKKEVIENLGTIAKSGTKSFIKSIEKSNSEKNNQLIGKFGVGFYSVFIVSEKVLVLTRSFKENEKNGVLWESSGKGEYTISNIIKKDVGTEITIFLKESEKEFCDELNIKNIVLKYSNHINFPIKLKTKITKDNKILTPEEKKSYTWKQINTGKSLWSKKKSEIKDIEYKEFYKNFFNDNYDPLIWSHNHVEGKQEYVSLLYIPRKASWDIWNREHKHGLKLYVKKVFIMDQSSEFIPNYLRFIKGIIDSNDLPLNVSREILQNNENIYKIKINLTKKALLMLENLSKNHPDEYKLFWKEFGLILKEGPSEDIKNYENVIKLFRFSSTYINSENQEVSLEDYVKRMQSGQNKIFYITSDNYLSAKNNPHLEKLKEKKIEVLLLFDRIDEWMMNYMTEFKKIKFQSISKYSSYLENIFKDENNDQKNTEQKLSTIILRIKSYLKDRVKDVRFTSKLTNSPSTVTTDENDITTQMSKLLISTGQESPEIKYIFELNANHPIIKHVFNIEDKNIFNNWIELLFEESILSERGNLDDPNKFIHRINNLLLSNIIRLN.

Residues 1 to 344 (MQKKETLEFQ…SNDLPLNVSR (344 aa)) form an a; substrate-binding region. Residues 345 to 560 (EILQNNENIY…ENDITTQMSK (216 aa)) are b. The interval 561 to 638 (LLISTGQESP…LLLSNIIRLN (78 aa)) is c.

The protein belongs to the heat shock protein 90 family. In terms of assembly, homodimer.

The protein resides in the cytoplasm. Its function is as follows. Molecular chaperone. Has ATPase activity. The polypeptide is Chaperone protein HtpG (Wigglesworthia glossinidia brevipalpis).